A 378-amino-acid chain; its full sequence is Atypical chemokine receptor 2 (378 aa).

Topologically, residues 1-49 (MPTVASPLPLTTVGSENSSSIYDYDYLDDMTILVCRKDEVLSFGRVFLP) are extracellular. Asn17 carries an N-linked (GlcNAc...) asparagine glycan. The chain crosses the membrane as a helical span at residues 50 to 70 (VVYSLIFVLGLAGNLLLLVVL). Residues 71-91 (LHSAPRRRTMELYLLNLAVSN) lie on the Cytoplasmic side of the membrane. Residues 92-112 (LLFVVTMPFWAISVAWHWVFG) form a helical membrane-spanning segment. Residues 113 to 117 (SFLCK) are Extracellular-facing. A disulfide bridge links Cys116 with Cys194. The helical transmembrane segment at 118 to 139 (VISTLYSINFYCGIFFITCMSL) threads the bilayer. The Cytoplasmic portion of the chain corresponds to 140-161 (DKYLEIVHAQPLHRPKAQFRNL). Residues 162–182 (LLIVMVWITSLAISVPEMVFV) form a helical membrane-spanning segment. The Extracellular segment spans residues 183–216 (QIHQTLDGVWHCYADFGGHATIWKLYLRFQLNLL). Residues 217–237 (GFLLPLLAMIFFYSRIGCVLV) form a helical membrane-spanning segment. Residues 238-249 (RLRPPGQGRALR) are Cytoplasmic-facing. The helical transmembrane segment at 250–270 (MAAALVIVFFMLWFPYNLTLF) threads the bilayer. The Extracellular segment spans residues 271 to 292 (LHSLLDLHVFGNCEISHRLDYT). The chain crosses the membrane as a helical span at residues 293–313 (LQVTESLAFSHCCFTPVLYAF). Topologically, residues 314–378 (CSHRFRRYLK…SLNKGEMGNT (65 aa)) are cytoplasmic. Residues 326 to 378 (LSVMLRWHQAPGTPSSNHSESSRVTAQEDVVSMNDLGERQSEDSLNKGEMGNT) are C-terminal cytoplasmic tail.

It belongs to the G-protein coupled receptor 1 family. Atypical chemokine receptor subfamily. Post-translationally, phosphorylated on serine residues in the C-terminal cytoplasmic tail. Expressed on apoptotic neutrophils (at protein level).

The protein resides in the early endosome. It localises to the recycling endosome. The protein localises to the cell membrane. Its function is as follows. Atypical chemokine receptor that controls chemokine levels and localization via high-affinity chemokine binding that is uncoupled from classic ligand-driven signal transduction cascades, resulting instead in chemokine sequestration, degradation, or transcytosis. Also known as interceptor (internalizing receptor) or chemokine-scavenging receptor or chemokine decoy receptor. Acts as a receptor for chemokines including CCL2, CCL3, CCL3L1, CCL4, CCL5, CCL7, CCL8, CCL11, CCL13, CCL17, CCL22, CCL23, CCL24, SCYA2/MCP-1, SCY3/MIP-1-alpha, SCYA5/RANTES and SCYA7/MCP-3. Upon active ligand stimulation, activates a beta-arrestin 1 (ARRB1)-dependent, G protein-independent signaling pathway that results in the phosphorylation of the actin-binding protein cofilin (CFL1) through a RAC1-PAK1-LIMK1 signaling pathway. Activation of this pathway results in up-regulation of ACKR2 from endosomal compartment to cell membrane, increasing its efficiency in chemokine uptake and degradation. By scavenging chemokines in tissues, on the surfaces of lymphatic vessels, and in placenta, plays an essential role in the resolution (termination) of the inflammatory response and in the regulation of adaptive immune responses. Plays a major role in the immune silencing of macrophages during the resolution of inflammation. Acts as a regulator of inflammatory leukocyte interactions with lymphatic endothelial cells (LECs) and is required for immature/mature dendritic cells discrimination by LECs. The protein is Atypical chemokine receptor 2 (Ackr2) of Mus musculus (Mouse).